Consider the following 248-residue polypeptide: Probable transcriptional regulatory protein Acid345_2125 (248 aa).

It belongs to the TACO1 family.

The protein localises to the cytoplasm. The protein is Probable transcriptional regulatory protein Acid345_2125 of Koribacter versatilis (strain Ellin345).